Consider the following 106-residue polypeptide: MNIENKLDVDAVLSEIIEDHDAFSENYDFDFSDYLKPIEIEDWVQDGKCQYRQCVYFSPKHNVHVAVNESRSGSYHSDWYYAVPTVELVELRERVVTQTVREWITL.

This is an uncharacterized protein from Enterobacteria phage T4 (Bacteriophage T4).